The chain runs to 200 residues: Probable GTP-binding protein EngB (200 aa).

The region spanning 25-199 is the EngB-type G domain; it reads SGYEVAFAGR…ISVLDRWYEW (175 aa). GTP is bound by residues 33-40, 60-64, 78-81, 145-148, and 178-180; these read GRSNAGKS, GRTQL, DLPG, TKAD, and FSS. 2 residues coordinate Mg(2+): serine 40 and threonine 62.

The protein belongs to the TRAFAC class TrmE-Era-EngA-EngB-Septin-like GTPase superfamily. EngB GTPase family. Mg(2+) serves as cofactor.

Necessary for normal cell division and for the maintenance of normal septation. The polypeptide is Probable GTP-binding protein EngB (Legionella pneumophila (strain Paris)).